A 276-amino-acid polypeptide reads, in one-letter code: MAQVIKRKPTSPGRRFVVSIVDKELHKGTSYGPLTQNKNRINGRNNAGRITMRHKGGGHKRRYRIIDFKRNKDDITARVERLEYDPNRSANIALILYADGKRHYIIAPRGLSVGDMIVSGNSVAIQVGNVMPLSNIPLGSIVHCIELRPMKGAQIARSAGTSAQLIAKRGTYVTLRLRSGEVRKVLTDCRATIGEVSRSEHSLRKLGKAGATRWHGVRPTVRGVVMNSVDHPHGGGEGKTSGGRHPVSPWGTPTKGYKTRSNKRTDKLILRHRNKG.

Positions 226-276 are disordered; sequence MNSVDHPHGGGEGKTSGGRHPVSPWGTPTKGYKTRSNKRTDKLILRHRNKG.

It belongs to the universal ribosomal protein uL2 family. As to quaternary structure, part of the 50S ribosomal subunit. Forms a bridge to the 30S subunit in the 70S ribosome.

One of the primary rRNA binding proteins. Required for association of the 30S and 50S subunits to form the 70S ribosome, for tRNA binding and peptide bond formation. It has been suggested to have peptidyltransferase activity; this is somewhat controversial. Makes several contacts with the 16S rRNA in the 70S ribosome. The polypeptide is Large ribosomal subunit protein uL2 (Vesicomyosocius okutanii subsp. Calyptogena okutanii (strain HA)).